Reading from the N-terminus, the 140-residue chain is Large ribosomal subunit protein uL16 (140 aa).

It belongs to the universal ribosomal protein uL16 family. Part of the 50S ribosomal subunit.

Functionally, binds 23S rRNA and is also seen to make contacts with the A and possibly P site tRNAs. The chain is Large ribosomal subunit protein uL16 from Onion yellows phytoplasma (strain OY-M).